Here is a 449-residue protein sequence, read N- to C-terminus: Elongation factor 1-alpha 1 (449 aa).

One can recognise a tr-type G domain in the interval lysine 5–serine 230. Positions glycine 14–serine 21 are G1. Glycine 14 to serine 21 serves as a coordination point for GTP. Positions glycine 70 to aspartate 74 are G2. The G3 stretch occupies residues aspartate 91 to glycine 94. Residues aspartate 91–histidine 95 and asparagine 153–aspartate 156 each bind GTP. The G4 stretch occupies residues asparagine 153–aspartate 156. Positions serine 194–tryptophan 196 are G5. Residue glutamate 362 is modified to 5-glutamyl glycerylphosphorylethanolamine.

The protein belongs to the TRAFAC class translation factor GTPase superfamily. Classic translation factor GTPase family. EF-Tu/EF-1A subfamily. Phosphatidylethanolamine (PE) is a direct precursor of the ethanolamine-phosphoglycerol (EPG) moiety.

It localises to the cytoplasm. In terms of biological role, this protein promotes the GTP-dependent binding of aminoacyl-tRNA to the A-site of ribosomes during protein biosynthesis. The protein is Elongation factor 1-alpha 1 (TEF1) of Trypanosoma brucei brucei (strain 927/4 GUTat10.1).